A 75-amino-acid polypeptide reads, in one-letter code: Sec-independent protein translocase protein TatA (75 aa).

A helical membrane pass occupies residues 1–21 (MGMPSMPELLIVLAIVVLLFG). The disordered stretch occupies residues 47-75 (DEEEEVKEITKKEEPKVEAAAEEKKSENA). Positions 53-75 (KEITKKEEPKVEAAAEEKKSENA) are enriched in basic and acidic residues.

The protein belongs to the TatA/E family. The Tat system comprises two distinct complexes: a TatABC complex, containing multiple copies of TatA, TatB and TatC subunits, and a separate TatA complex, containing only TatA subunits. Substrates initially bind to the TatABC complex, which probably triggers association of the separate TatA complex to form the active translocon.

It is found in the cell inner membrane. Functionally, part of the twin-arginine translocation (Tat) system that transports large folded proteins containing a characteristic twin-arginine motif in their signal peptide across membranes. TatA could form the protein-conducting channel of the Tat system. The polypeptide is Sec-independent protein translocase protein TatA (Sulfurovum sp. (strain NBC37-1)).